The chain runs to 346 residues: MADTHKISFEPVDIEMEVGEDETILDAAFRQGIHLMHGCREGRCSCKSYMLEGDVQMDDYSTFACNDAEEAEGYVLLCRTYAYSDCEIELLNFDEDELLGGAPIQDVTTKVAAIEPMTPDIVSLKLDVVEPESVEFKSGQYFDLFIPGTEDKRSFSIATTPATPDRLEFLIKKYPGGLFAGMLTDGLSVGQEIKLNGPYGSCTLRNGHVLPIVAIGGGAGMAPLLSLLRHISETGLNRPVRFYYGARTAADLFLLDEIATLGEKIDDFSFTACLSESTDNAPEGVTVIGGNVTDIVNDNEADLARTEVYFCAPPPMVDAALALAEQHSVPHDQIFYDKFTSPAFDS.

Positions 5–94 (HKISFEPVDI…DCEIELLNFD (90 aa)) constitute a 2Fe-2S ferredoxin-type domain. [2Fe-2S] cluster-binding residues include Cys39, Cys44, Cys46, and Cys78. Residues 104–205 (IQDVTTKVAA…NGPYGSCTLR (102 aa)) enclose the FAD-binding FR-type domain.

The protein belongs to the bacterial ring-hydroxylating dioxygenase ferredoxin reductase family. The propane 2-monooxygenase multicomponent enzyme system is composed of an electron transfer component and a monooxygenase component interacting with the effector protein PrmD. The electron transfer component is composed of a reductase (PrmB), and the monooxygenase component is formed by a large subunit (PrmA) and a small subunit (PrmC). FAD is required as a cofactor. Requires [2Fe-2S] cluster as cofactor.

Functionally, reductase component of the propane 2-monooxygenase multicomponent enzyme system which is involved in the degradation of propane via the O2-dependent hydroxylation of propane. Reductase catalyzes the transfer of electrons from NADH or NADPH to monooxygenase. This chain is Propane 2-monooxygenase, reductase component, found in Gordonia sp. (strain TY-5).